The chain runs to 364 residues: 4-hydroxy-3-methylbut-2-en-1-yl diphosphate synthase (flavodoxin) (364 aa).

Residues Cys268, Cys271, Cys303, and Glu310 each contribute to the [4Fe-4S] cluster site.

The protein belongs to the IspG family. [4Fe-4S] cluster is required as a cofactor.

The enzyme catalyses (2E)-4-hydroxy-3-methylbut-2-enyl diphosphate + oxidized [flavodoxin] + H2O + 2 H(+) = 2-C-methyl-D-erythritol 2,4-cyclic diphosphate + reduced [flavodoxin]. The protein operates within isoprenoid biosynthesis; isopentenyl diphosphate biosynthesis via DXP pathway; isopentenyl diphosphate from 1-deoxy-D-xylulose 5-phosphate: step 5/6. Converts 2C-methyl-D-erythritol 2,4-cyclodiphosphate (ME-2,4cPP) into 1-hydroxy-2-methyl-2-(E)-butenyl 4-diphosphate. This chain is 4-hydroxy-3-methylbut-2-en-1-yl diphosphate synthase (flavodoxin), found in Desulfotalea psychrophila (strain LSv54 / DSM 12343).